Consider the following 92-residue polypeptide: UPF0223 protein EF_2462 (92 aa).

It belongs to the UPF0223 family.

In Enterococcus faecalis (strain ATCC 700802 / V583), this protein is UPF0223 protein EF_2462.